A 463-amino-acid polypeptide reads, in one-letter code: MTQSNNFATSPLWQQGSVVELTITGLNHQGEGIGRFNERVVFVPDTAPGDRLEVRLVKVKRNYALAQLLKILEPSVQRTRPSCIVADKCGGCQWQHLDYQFQVESKQQQIIDALERIGGFTTLPLEPLLQSPASLGYRNKATYPLSRSKTGQVQAGYYRKGSHRLVNINQCPVQDDRLNLLLTEVKKDIENRGWSIYDEEKKQGKLRHLSLRIGQRTGEMLLTLISAHKGLPDLEEQAGEWLERYPDLGGICLNIQPEPNNRIFGDETVVIAGRGICREKFADLSFSLGANTFFQVNSGAAELLLTRLQQALNLQGAELLVDAYAGVGTFTLPLARQVRQAIAIEVNQDSVHQGQRNAEINQIANVDFLAGTVETVLPTLSEIPDVLLLDPPRKGCAPEVLREIIRQRPEKIAYISCQPPTLARDLKFLCAEGFYGITWVQGCDFFPQTAHVECAVILKAVNG.

In terms of domain architecture, TRAM spans 12-70 (LWQQGSVVELTITGLNHQGEGIGRFNERVVFVPDTAPGDRLEVRLVKVKRNYALAQLLK). The [4Fe-4S] cluster site is built by cysteine 83, cysteine 89, cysteine 92, and cysteine 171. S-adenosyl-L-methionine contacts are provided by glutamine 295, tyrosine 324, glutamate 345, and aspartate 390. Residue cysteine 417 is the Nucleophile of the active site.

The protein belongs to the class I-like SAM-binding methyltransferase superfamily. RNA M5U methyltransferase family.

This is an uncharacterized protein from Synechocystis sp. (strain ATCC 27184 / PCC 6803 / Kazusa).